The following is a 61-amino-acid chain: Metallothionein-1B (61 aa).

Residues 1 to 29 (MDPNCSCTTGGSCACAGSCKCKECKCTSC) form a beta region. A divalent metal cation is bound by residues C5, C7, C13, C15, C19, C21, C24, C26, C29, C33, C34, C36, C37, C41, C44, C48, C50, C57, C59, and C60. The alpha stretch occupies residues 30–61 (KKCCCSCCPVGCAKCAQGCVCKGSSEKCRCCA).

This sequence belongs to the metallothionein superfamily. Type 1 family. Monomer.

Its function is as follows. Metallothioneins have a high content of cysteine residues that bind various heavy metals; these proteins are transcriptionally regulated by both heavy metals and glucocorticoids. This is Metallothionein-1B (MT1B) from Homo sapiens (Human).